Here is a 282-residue protein sequence, read N- to C-terminus: Fibrinogen-like protein A (282 aa).

The N-terminal stretch at 1–24 (MFSFIMKAAILLILVGCISFCISS) is a signal peptide. The Fibrinogen C-terminal domain occupies 61-281 (SHSPEYPRDC…FAEMKLRNRS (221 aa)). Intrachain disulfides connect cysteine 70/cysteine 101 and cysteine 224/cysteine 240.

The polypeptide is Fibrinogen-like protein A (Apostichopus parvimensis (Warty sea cucumber)).